The chain runs to 381 residues: L-lactate dehydrogenase (381 aa).

Residues 1 to 380 (MIISASTDYR…SADSLVRELG (380 aa)) form the FMN hydroxy acid dehydrogenase domain. Tyrosine 24 contributes to the substrate binding site. 2 residues coordinate FMN: serine 106 and glutamine 127. Residue tyrosine 129 participates in substrate binding. Threonine 155 is an FMN binding site. A substrate-binding site is contributed by arginine 164. Residue lysine 251 coordinates FMN. Residue histidine 275 is the Proton acceptor of the active site. Arginine 278 is a substrate binding site. 306–330 (DSGIRTGLDVVRMIALGADSVLLGR) is an FMN binding site.

This sequence belongs to the FMN-dependent alpha-hydroxy acid dehydrogenase family. Homotetramer. It depends on FMN as a cofactor.

The protein resides in the cell inner membrane. It carries out the reaction (S)-lactate + A = pyruvate + AH2. Functionally, catalyzes the conversion of L-lactate to pyruvate. Is coupled to the respiratory chain. In Pseudomonas aeruginosa (strain LESB58), this protein is L-lactate dehydrogenase.